Reading from the N-terminus, the 70-residue chain is DNA-directed RNA polymerase subunit omega (70 aa).

It belongs to the RNA polymerase subunit omega family. In terms of assembly, the RNAP catalytic core consists of 2 alpha, 1 beta, 1 beta' and 1 omega subunit. When a sigma factor is associated with the core the holoenzyme is formed, which can initiate transcription.

The enzyme catalyses RNA(n) + a ribonucleoside 5'-triphosphate = RNA(n+1) + diphosphate. Functionally, promotes RNA polymerase assembly. Latches the N- and C-terminal regions of the beta' subunit thereby facilitating its interaction with the beta and alpha subunits. This Bacillus cereus (strain B4264) protein is DNA-directed RNA polymerase subunit omega.